The sequence spans 329 residues: MYG1 protein (329 aa).

Belongs to the MYG1 family.

This is MYG1 protein from Dictyostelium discoideum (Social amoeba).